The following is a 122-amino-acid chain: Large ribosomal subunit protein uL14 (122 aa).

The protein belongs to the universal ribosomal protein uL14 family. As to quaternary structure, part of the 50S ribosomal subunit. Forms a cluster with proteins L3 and L19. In the 70S ribosome, L14 and L19 interact and together make contacts with the 16S rRNA in bridges B5 and B8.

In terms of biological role, binds to 23S rRNA. Forms part of two intersubunit bridges in the 70S ribosome. This chain is Large ribosomal subunit protein uL14, found in Bartonella bacilliformis (strain ATCC 35685 / KC583 / Herrer 020/F12,63).